A 382-amino-acid polypeptide reads, in one-letter code: Fetuin-B (382 aa).

The first 15 residues, 1–15 (MGLLLPLALCILVLC), serve as a signal peptide directing secretion. Cystatin fetuin-B-type domains are found at residues 25–138 (ALNP…YNCT) and 149–255 (MTCP…VTCD). N-linked (GlcNAc...) asparagine glycosylation is present at asparagine 37. Intrachain disulfides connect cysteine 93–cysteine 104, cysteine 117–cysteine 137, and cysteine 151–cysteine 154. N-linked (GlcNAc...) asparagine glycosylation occurs at asparagine 136. Asparagine 182 is a glycosylation site (N-linked (GlcNAc...) asparagine). Disulfide bonds link cysteine 216/cysteine 224 and cysteine 237/cysteine 254. Polar residues-rich tracts occupy residues 262-276 (PATG…QKPT) and 286-295 (QKNTPPTDSP). 2 disordered regions span residues 262-320 (PATG…EKGP) and 363-382 (ARTA…VLPP). Threonine 289 and threonine 292 each carry an O-linked (GalNAc...) threonine glycan. The span at 310–320 (LDDKNSQEKGP) shows a compositional bias: basic and acidic residues. Serine 315 is modified (phosphoserine).

The protein belongs to the fetuin family. Liver and testis.

Its subcellular location is the secreted. Its function is as follows. Protease inhibitor required for egg fertilization. Required to prevent premature zona pellucida hardening before fertilization, probably by inhibiting the protease activity of ASTL, a protease that mediates the cleavage of ZP2 and triggers zona pellucida hardening. The protein is Fetuin-B (FETUB) of Homo sapiens (Human).